Here is a 158-residue protein sequence, read N- to C-terminus: Small ribosomal subunit protein uS7 (158 aa).

The protein belongs to the universal ribosomal protein uS7 family. Part of the 30S ribosomal subunit. Contacts proteins S9 and S11.

Functionally, one of the primary rRNA binding proteins, it binds directly to 16S rRNA where it nucleates assembly of the head domain of the 30S subunit. Is located at the subunit interface close to the decoding center, probably blocks exit of the E-site tRNA. The chain is Small ribosomal subunit protein uS7 from Gluconacetobacter diazotrophicus (strain ATCC 49037 / DSM 5601 / CCUG 37298 / CIP 103539 / LMG 7603 / PAl5).